Here is a 154-residue protein sequence, read N- to C-terminus: MAFNLPRIRNKSEVSNDLMRRNHLDNIFDDFFNEFYTFPYSSSTEKNLIPRTDISETDSGYSLEVELPGINQKDIDINIDNHILTIKGQKEEKSEEKNKNYHMRERYYGSFQRSISLPANINDDAINARFENGILHITIPKKEQGKTRKIEVKG.

Residues 43 to 154 (STEKNLIPRT…GKTRKIEVKG (112 aa)) enclose the sHSP domain.

Belongs to the small heat shock protein (HSP20) family.

The protein is Small heat shock protein C2 (hspC2) of Rickettsia felis (strain ATCC VR-1525 / URRWXCal2) (Rickettsia azadi).